Consider the following 105-residue polypeptide: Large ribosomal subunit protein uL23 (105 aa).

The protein belongs to the universal ribosomal protein uL23 family. In terms of assembly, part of the 50S ribosomal subunit. Contacts protein L29, and trigger factor when it is bound to the ribosome.

One of the early assembly proteins it binds 23S rRNA. One of the proteins that surrounds the polypeptide exit tunnel on the outside of the ribosome. Forms the main docking site for trigger factor binding to the ribosome. In Janthinobacterium sp. (strain Marseille) (Minibacterium massiliensis), this protein is Large ribosomal subunit protein uL23.